A 173-amino-acid chain; its full sequence is ATP-dependent protease subunit HslV (173 aa).

Threonine 2 is a catalytic residue. Na(+) contacts are provided by glycine 158, aspartate 161, and serine 164.

Belongs to the peptidase T1B family. HslV subfamily. As to quaternary structure, a double ring-shaped homohexamer of HslV is capped on each side by a ring-shaped HslU homohexamer. The assembly of the HslU/HslV complex is dependent on binding of ATP.

It localises to the cytoplasm. It catalyses the reaction ATP-dependent cleavage of peptide bonds with broad specificity.. Allosterically activated by HslU binding. Functionally, protease subunit of a proteasome-like degradation complex believed to be a general protein degrading machinery. This Haemophilus ducreyi (strain 35000HP / ATCC 700724) protein is ATP-dependent protease subunit HslV.